The sequence spans 233 residues: MTALRQKTLAAAAALDYIESGMTLGLGSGSTAEIFLRLLGEKIKDGLDVRGVPTSQRTAQIAAENGVPLIDVDHVNNIAITIDGADEVDGRFQLIKGGGACLLREKIIAHASDLMIVMVDESKLVATLGKFPLPVEVDRFGFSLTASQVYEALRRAGIKSPDVQLRRKGDGLEPLVTDGGNYILDCACEAIPDAGAVDRALKAIPGVVEHGLFINLARVVIVGEDGEARVMEL.

Substrate-binding positions include 28–31, 83–86, and 96–99; these read SGST, DGAD, and KGGG. Glu-105 acts as the Proton acceptor in catalysis. Lys-123 serves as a coordination point for substrate.

The protein belongs to the ribose 5-phosphate isomerase family. In terms of assembly, homodimer.

It carries out the reaction aldehydo-D-ribose 5-phosphate = D-ribulose 5-phosphate. Its pathway is carbohydrate degradation; pentose phosphate pathway; D-ribose 5-phosphate from D-ribulose 5-phosphate (non-oxidative stage): step 1/1. Its function is as follows. Catalyzes the reversible conversion of ribose-5-phosphate to ribulose 5-phosphate. The polypeptide is Ribose-5-phosphate isomerase A (Maricaulis maris (strain MCS10) (Caulobacter maris)).